The sequence spans 425 residues: Serine--tRNA ligase (425 aa).

228 to 230 (TAE) contributes to the L-serine binding site. ATP is bound at residue 259–261 (RSE). Residue glutamate 282 coordinates L-serine. 346–349 (EIAS) contacts ATP. Residue serine 382 coordinates L-serine.

The protein belongs to the class-II aminoacyl-tRNA synthetase family. Type-1 seryl-tRNA synthetase subfamily. Homodimer. The tRNA molecule binds across the dimer.

Its subcellular location is the cytoplasm. The enzyme catalyses tRNA(Ser) + L-serine + ATP = L-seryl-tRNA(Ser) + AMP + diphosphate + H(+). It carries out the reaction tRNA(Sec) + L-serine + ATP = L-seryl-tRNA(Sec) + AMP + diphosphate + H(+). It participates in aminoacyl-tRNA biosynthesis; selenocysteinyl-tRNA(Sec) biosynthesis; L-seryl-tRNA(Sec) from L-serine and tRNA(Sec): step 1/1. Catalyzes the attachment of serine to tRNA(Ser). Is also able to aminoacylate tRNA(Sec) with serine, to form the misacylated tRNA L-seryl-tRNA(Sec), which will be further converted into selenocysteinyl-tRNA(Sec). In Rickettsia felis (strain ATCC VR-1525 / URRWXCal2) (Rickettsia azadi), this protein is Serine--tRNA ligase.